We begin with the raw amino-acid sequence, 380 residues long: Crotonobetainyl-CoA reductase (380 aa).

It belongs to the acyl-CoA dehydrogenase family. Homotetramer. It depends on FAD as a cofactor.

The protein resides in the cytoplasm. The enzyme catalyses 4-(trimethylamino)butanoyl-CoA + oxidized [electron-transfer flavoprotein] + H(+) = crotonobetainyl-CoA + reduced [electron-transfer flavoprotein]. Its pathway is amine and polyamine metabolism; carnitine metabolism. Functionally, catalyzes the reduction of crotonobetainyl-CoA to gamma-butyrobetainyl-CoA. The protein is Crotonobetainyl-CoA reductase of Shigella flexneri serotype 5b (strain 8401).